Consider the following 154-residue polypeptide: Aspartate 1-decarboxylase 1 (154 aa).

Catalysis depends on Ser-26, which acts as the Schiff-base intermediate with substrate; via pyruvic acid. A Pyruvic acid (Ser) modification is found at Ser-26. Thr-58 serves as a coordination point for substrate. Tyr-59 functions as the Proton donor in the catalytic mechanism. 74–76 is a binding site for substrate; it reads GAA. The interval 129 to 154 is disordered; sequence VGLVRGDTNSPQPSLSEQAGDPRRAQ. Residues 135-145 are compositionally biased toward polar residues; that stretch reads DTNSPQPSLSE.

It belongs to the PanD family. As to quaternary structure, heterooctamer of four alpha and four beta subunits. Pyruvate is required as a cofactor. Is synthesized initially as an inactive proenzyme, which is activated by self-cleavage at a specific serine bond to produce a beta-subunit with a hydroxyl group at its C-terminus and an alpha-subunit with a pyruvoyl group at its N-terminus.

Its subcellular location is the cytoplasm. The enzyme catalyses L-aspartate + H(+) = beta-alanine + CO2. It functions in the pathway cofactor biosynthesis; (R)-pantothenate biosynthesis; beta-alanine from L-aspartate: step 1/1. Functionally, catalyzes the pyruvoyl-dependent decarboxylation of aspartate to produce beta-alanine. The protein is Aspartate 1-decarboxylase 1 of Frankia casuarinae (strain DSM 45818 / CECT 9043 / HFP020203 / CcI3).